A 554-amino-acid polypeptide reads, in one-letter code: Glucose-binding protein GlcS (554 aa).

The Cytoplasmic portion of the chain corresponds to Met-1–Gln-17. Residues Ile-18–Val-38 traverse the membrane as a helical segment. Residues Leu-39–Thr-525 lie on the Extracellular side of the membrane. Residues Ser-526–Ile-546 form a helical membrane-spanning segment. The Cytoplasmic portion of the chain corresponds to Asp-547–Lys-554.

Belongs to the bacterial solute-binding protein 1 family. As to quaternary structure, the complex is composed of two ATP-binding proteins (GlcV), two transmembrane proteins (GlcT and GlcU) and a solute-binding protein (GlcS).

It is found in the cell membrane. Its activity is regulated as follows. Binding of glucose is strongly inhibited by galactose and mannose. Part of the ABC transporter complex GlcSTUV involved in glucose uptake. Binds glucose. Can also bind galactose and mannose. This is Glucose-binding protein GlcS from Saccharolobus solfataricus (strain ATCC 35092 / DSM 1617 / JCM 11322 / P2) (Sulfolobus solfataricus).